The chain runs to 269 residues: UPF0162 protein BUsg_167 (269 aa).

The protein belongs to the UPF0162 family.

In Buchnera aphidicola subsp. Schizaphis graminum (strain Sg), this protein is UPF0162 protein BUsg_167.